We begin with the raw amino-acid sequence, 185 residues long: Ribosome-recycling factor (185 aa).

The protein belongs to the RRF family.

The protein localises to the cytoplasm. Responsible for the release of ribosomes from messenger RNA at the termination of protein biosynthesis. May increase the efficiency of translation by recycling ribosomes from one round of translation to another. This chain is Ribosome-recycling factor, found in Francisella tularensis subsp. tularensis (strain FSC 198).